We begin with the raw amino-acid sequence, 255 residues long: Probable UDP-N-acetylglucosamine pyrophosphorylase (255 aa).

The enzyme catalyses N-acetyl-alpha-D-glucosamine 1-phosphate + UTP + H(+) = UDP-N-acetyl-alpha-D-glucosamine + diphosphate. It functions in the pathway nucleotide-sugar biosynthesis; UDP-N-acetyl-alpha-D-glucosamine biosynthesis; UDP-N-acetyl-alpha-D-glucosamine from N-acetyl-alpha-D-glucosamine 1-phosphate: step 1/1. The polypeptide is Probable UDP-N-acetylglucosamine pyrophosphorylase (Acanthamoeba polyphaga (Amoeba)).